A 443-amino-acid polypeptide reads, in one-letter code: MPPSTGSVPPAASTPAAGDEATAAGRVLLGRYELGGLLGRGASAKVYLARDLLTGRDVAIKSFPNPRHGGGLRGGEEDVLLRPAPIEREAAILPRLRHRHVMRLREILATRKKVHFVLDLAAGGELFSLLDASGRMTEDLARHYFRQLISAVRYCHSRGVYHRDIKPENLLLDDAGDLKVADFGLGAVADGALHHTLCGTPAYVAPEILSRKGYNPAKVDIWSCGVVLFVLAAGYLPFNDASLVNMYRKIYAGKFRCPAWFSPELRCLVRRILDPNPATRIDTEEIITHPWFRQDASHFAMAQLMQHGHDEEAKFKTEFKEDDMARDMTAFDILACSPGSDLSGLFGAEPGKERVFVGEPAAAVLSRVEEAGKKEGYMVTREGKKGTGPVYVKGENGGIVAKVCVFKIADAVSVVEVVKGYGAEAARFWKARLEPAMKPPAAI.

Residues tyrosine 32–phenylalanine 292 form the Protein kinase domain. ATP is bound by residues leucine 38–valine 46 and lysine 61. Residue aspartate 164 is the Proton acceptor of the active site. An activation loop region spans residues aspartate 182–glutamate 207. An NAF domain is found at alanine 313 to glycine 347. A PPI region spans residues proline 350–valine 379.

Belongs to the protein kinase superfamily. CAMK Ser/Thr protein kinase family. SNF1 subfamily. It depends on Mn(2+) as a cofactor.

The enzyme catalyses L-seryl-[protein] + ATP = O-phospho-L-seryl-[protein] + ADP + H(+). It carries out the reaction L-threonyl-[protein] + ATP = O-phospho-L-threonyl-[protein] + ADP + H(+). CIPK serine-threonine protein kinases interact with CBL proteins. Binding of a CBL protein to the regulatory NAF domain of CIPK protein lead to the activation of the kinase in a calcium-dependent manner. The polypeptide is CBL-interacting protein kinase 29 (CIPK29) (Oryza sativa subsp. japonica (Rice)).